The following is a 111-amino-acid chain: Large ribosomal subunit protein uL24 (111 aa).

The protein belongs to the universal ribosomal protein uL24 family. In terms of assembly, part of the 50S ribosomal subunit.

In terms of biological role, one of two assembly initiator proteins, it binds directly to the 5'-end of the 23S rRNA, where it nucleates assembly of the 50S subunit. One of the proteins that surrounds the polypeptide exit tunnel on the outside of the subunit. The protein is Large ribosomal subunit protein uL24 of Chlamydia muridarum (strain MoPn / Nigg).